Here is a 350-residue protein sequence, read N- to C-terminus: N(4)-bis(aminopropyl)spermidine synthase (350 aa).

The protein belongs to the branched-chain polyamine synthase family.

It is found in the cytoplasm. The enzyme catalyses 2 S-adenosyl 3-(methylsulfanyl)propylamine + spermidine = N(4)-bis(aminopropyl)spermidine + 2 S-methyl-5'-thioadenosine + 2 H(+). It functions in the pathway amine and polyamine biosynthesis. Functionally, involved in the biosynthesis of branched-chain polyamines, which support the growth of thermophiles under high-temperature conditions. Catalyzes the sequential condensation of spermidine with the aminopropyl groups of decarboxylated S-adenosylmethionines to produce N(4)-bis(aminopropyl)spermidine via N(4)-aminopropylspermidine. In Methanocaldococcus jannaschii (strain ATCC 43067 / DSM 2661 / JAL-1 / JCM 10045 / NBRC 100440) (Methanococcus jannaschii), this protein is N(4)-bis(aminopropyl)spermidine synthase.